A 370-amino-acid chain; its full sequence is Spermidine/putrescine import ATP-binding protein PotA (370 aa).

Residues 6-236 (IELHQVTKRY…PINHFVADFI (231 aa)) form the ABC transporter domain. 38 to 45 (GPSGCGKT) contacts ATP.

This sequence belongs to the ABC transporter superfamily. Spermidine/putrescine importer (TC 3.A.1.11.1) family. The complex is composed of two ATP-binding proteins (PotA), two transmembrane proteins (PotB and PotC) and a solute-binding protein (PotD).

It is found in the cell membrane. The catalysed reaction is ATP + H2O + polyamine-[polyamine-binding protein]Side 1 = ADP + phosphate + polyamineSide 2 + [polyamine-binding protein]Side 1.. Functionally, part of the ABC transporter complex PotABCD involved in spermidine/putrescine import. Responsible for energy coupling to the transport system. The protein is Spermidine/putrescine import ATP-binding protein PotA of Levilactobacillus brevis (strain ATCC 367 / BCRC 12310 / CIP 105137 / JCM 1170 / LMG 11437 / NCIMB 947 / NCTC 947) (Lactobacillus brevis).